A 230-amino-acid chain; its full sequence is Flagellar L-ring protein (230 aa).

The first 15 residues, 1 to 15 (MSRPPLLSSACLAAT), serve as a signal peptide directing secretion. Cys-16 carries N-palmitoyl cysteine lipidation. Cys-16 is lipidated: S-diacylglycerol cysteine.

It belongs to the FlgH family. The basal body constitutes a major portion of the flagellar organelle and consists of four rings (L,P,S, and M) mounted on a central rod.

The protein localises to the cell outer membrane. Its subcellular location is the bacterial flagellum basal body. In terms of biological role, assembles around the rod to form the L-ring and probably protects the motor/basal body from shearing forces during rotation. The sequence is that of Flagellar L-ring protein from Xanthomonas oryzae pv. oryzae (strain MAFF 311018).